The primary structure comprises 440 residues: MSYFEHIPAIRYEGPQSDNPLAYHHYDRTKRVLGKTLEEHLRIAVCYWHTFVWPGHDIFGQGAFRRPWQQPGDALERARQKADAAFEFFTKLGTPFYTFHDTDVAPEGDSLREYVDNFARMVDYLGERQQASGVRLLWGTANLFSHPRFAAGAATNPNPDVFAWAATQVRHALDATHRLGGENYVLWGGREGYETLLNTDLKREREQFARFLSMVVEHKHRIGFRGALLIEPKPQEPTKHQYDYDVATVHGFLTQYGLQDEIRVNIEANHATLAGHSFHHEIANAFALGVFGSVDANRGDPQNGWDTDQFPNSVEELTLAFYEILRHGGFTTGGMNFDAKVRRQSVDPEDLFYGHVGAIDVLALALERAAVLVENDRLEAMRRQRYAQWDDAFGRKILSGGYTLESLAADALARGVNPQHASGAQERLENIVNQAIYALR.

Active-site residues include histidine 100 and aspartate 103. The Mg(2+) site is built by glutamate 231, glutamate 267, histidine 270, aspartate 295, aspartate 306, aspartate 308, and aspartate 338.

This sequence belongs to the xylose isomerase family. In terms of assembly, homotetramer. Mg(2+) serves as cofactor.

The protein localises to the cytoplasm. It carries out the reaction alpha-D-xylose = alpha-D-xylulofuranose. This chain is Xylose isomerase, found in Burkholderia multivorans (strain ATCC 17616 / 249).